Reading from the N-terminus, the 257-residue chain is AN1-type zinc finger protein 2B (257 aa).

AN1-type zinc fingers lie at residues 4-52 (PDLG…QKDI) and 94-142 (KIFT…HPTS). Zn(2+) contacts are provided by cysteine 10, cysteine 15, cysteine 25, cysteine 28, cysteine 33, histidine 36, histidine 42, cysteine 44, cysteine 100, cysteine 105, cysteine 115, cysteine 118, cysteine 123, histidine 126, histidine 132, and cysteine 134. The segment at 141 to 151 (TSRAGLAAISR) is VCP/p97-interacting motif (VIM). The interval 153–187 (QAVASTSTVPSPSQTMPSCTSPSRATTRSPSWTAP) is disordered. Over residues 155-171 (VASTSTVPSPSQTMPSC) the composition is skewed to polar residues. Residues serine 163 and serine 173 each carry the phosphoserine modification. Low complexity predominate over residues 172–186 (TSPSRATTRSPSWTA). 2 UIM domains span residues 197-216 (SEDEALQRALEMSLAETKPQ) and 221-240 (QEEEDLALAQALSASEAEYQ). Residue cysteine 254 is modified to Cysteine methyl ester. Cysteine 254 carries the S-geranylgeranyl cysteine lipid modification. A CAAX motif motif is present at residues 254 to 257 (CSLC). Residues 255–257 (SLC) constitute a propeptide, removed in mature form.

Binds 'Lys-48'-linked polyubiquitin chains of ubiquitinated proteins. Associates with the proteasome complex; upon exposure to arsenite. Interacts (via VIM motif) with VCP; the interaction is direct. Interacts with BAG6. Interacts with IGF1R (nascent precursor form). Interacts with DERL1, FAF2, NPLOC4 and UFD1; probably through VCP. In terms of processing, phosphorylated by MAPK14. Phosphorylation has no effect on association with the proteasome complex.

The protein resides in the endoplasmic reticulum membrane. In terms of biological role, plays a role in protein homeostasis by regulating both the translocation and the ubiquitin-mediated proteasomal degradation of nascent proteins at the endoplasmic reticulum. It is involved in the regulation of signal-mediated translocation of proteins into the endoplasmic reticulum. It also plays a role in the ubiquitin-mediated proteasomal degradation of proteins for which signal-mediated translocation to the endoplasmic reticulum has failed. May therefore function in the endoplasmic reticulum stress-induced pre-emptive quality control, a mechanism that selectively attenuates the translocation of newly synthesized proteins into the endoplasmic reticulum and reroutes them to the cytosol for proteasomal degradation. By controlling the steady-state expression of the IGF1R receptor, indirectly regulates the insulin-like growth factor receptor signaling pathway. This is AN1-type zinc finger protein 2B from Homo sapiens (Human).